The primary structure comprises 101 residues: Co-chaperonin GroES (101 aa).

The protein belongs to the GroES chaperonin family. Heptamer of 7 subunits arranged in a ring. Interacts with the chaperonin GroEL.

The protein resides in the cytoplasm. In terms of biological role, together with the chaperonin GroEL, plays an essential role in assisting protein folding. The GroEL-GroES system forms a nano-cage that allows encapsulation of the non-native substrate proteins and provides a physical environment optimized to promote and accelerate protein folding. GroES binds to the apical surface of the GroEL ring, thereby capping the opening of the GroEL channel. The polypeptide is Co-chaperonin GroES (Lawsonia intracellularis).